A 286-amino-acid chain; its full sequence is ATP synthase gamma chain (286 aa).

The protein belongs to the ATPase gamma chain family. As to quaternary structure, F-type ATPases have 2 components, CF(1) - the catalytic core - and CF(0) - the membrane proton channel. CF(1) has five subunits: alpha(3), beta(3), gamma(1), delta(1), epsilon(1). CF(0) has three main subunits: a, b and c.

The protein resides in the cell membrane. In terms of biological role, produces ATP from ADP in the presence of a proton gradient across the membrane. The gamma chain is believed to be important in regulating ATPase activity and the flow of protons through the CF(0) complex. This Mycoplasma mobile (strain ATCC 43663 / 163K / NCTC 11711) (Mesomycoplasma mobile) protein is ATP synthase gamma chain.